The primary structure comprises 418 residues: Cell division protein FtsZ (418 aa).

GTP contacts are provided by residues glycine 27–asparagine 31, glycine 114–glycine 116, glutamate 145, lysine 149, and aspartate 193. A disordered region spans residues lysine 386–leucine 418.

The protein belongs to the FtsZ family. As to quaternary structure, homodimer. Polymerizes to form a dynamic ring structure in a strictly GTP-dependent manner. Interacts directly with several other division proteins.

The protein resides in the cytoplasm. Functionally, essential cell division protein that forms a contractile ring structure (Z ring) at the future cell division site. The regulation of the ring assembly controls the timing and the location of cell division. One of the functions of the FtsZ ring is to recruit other cell division proteins to the septum to produce a new cell wall between the dividing cells. Binds GTP and shows GTPase activity. The chain is Cell division protein FtsZ from Treponema pallidum (strain Nichols).